A 1744-amino-acid polypeptide reads, in one-letter code: Tensin-1 (1744 aa).

Residues 15-55 (SPAVNYELPSPGQSITKQVDTPDATRSPRGGQAHRKASRSM) form a disordered region. Positions 58-230 (TAAMESSCEL…HYFSGLLSGS (173 aa)) constitute a Phosphatase tensin-type domain. One can recognise a C2 tensin-type domain in the interval 235–361 (NKPLFLHHVI…GKVEFVFSYG (127 aa)). 7 disordered regions span residues 467 to 505 (TLSV…SPEE), 569 to 589 (DELP…SSLD), 666 to 686 (AQEH…PAWL), 724 to 797 (PQAP…APSR), 934 to 956 (GSQQ…QLPH), 982 to 1077 (RVAG…PGLA), and 1156 to 1437 (VPSP…GSAV). The span at 468–481 (LSVSSDSGNSTAST) shows a compositional bias: polar residues. The segment covering 580–589 (GSLGTLSSLD) has biased composition (low complexity). Polar residues predominate over residues 728 to 753 (ARSTSSREAVQRGLNSWQQQGGSRPP). A compositionally biased stretch (low complexity) spans 763 to 773 (SHSPSLSSCSP). The span at 774–783 (QPSPLQPMPP) shows a compositional bias: pro residues. 2 stretches are compositionally biased toward basic and acidic residues: residues 1004–1014 (TPSDSHYEKSS) and 1041–1054 (RPKE…KEAF). The segment covering 1060–1069 (ASPSSLTSGG) has biased composition (polar residues). 2 stretches are compositionally biased toward low complexity: residues 1156 to 1169 (VPSP…IHSV) and 1208 to 1220 (SAHS…SPSS). Composition is skewed to polar residues over residues 1344-1355 (LSRQSSASGYQP), 1370-1380 (GTSTPHSSSPD), and 1405-1420 (ERSN…NGKA). Positions 1421–1435 (SSPLSSGMSSPSSGS) are enriched in low complexity. The SH2 domain occupies 1472 to 1581 (WYKPDISREQ…ALPCKLVIPD (110 aa)). Residues 1607 to 1743 (ACNVLFINSV…SRVMLGSGQK (137 aa)) form the PTB domain.

Belongs to the PTEN phosphatase protein family. As to quaternary structure, binds to actin filaments. Interacts with phosphotyrosine-containing proteins. Tyrosine phosphorylated. In terms of tissue distribution, heart, gizzard, lung and skeletal muscle.

It is found in the cell surface. The protein resides in the cell junction. The protein localises to the focal adhesion. It localises to the cytoplasm. Its subcellular location is the cytoskeleton. Its function is as follows. May act as a protein phosphatase and/or a lipid phosphatase. Involved in fibrillar adhesion formation. Plays a role in cell polarization and migration. May be involved in cartilage development and in linking signal transduction pathways to the cytoskeleton. The chain is Tensin-1 (TNS1) from Gallus gallus (Chicken).